Consider the following 96-residue polypeptide: Protein Vpr (96 aa).

Residues 1 to 42 (MEQAPEDQGPQREPYNEWTLELLEELKNEAVRHFPRIWLHSL) are homooligomerization. A phosphoserine; by host mark is found at S79, S94, and S96.

This sequence belongs to the HIV-1 VPR protein family. In terms of assembly, homooligomer, may form homodimer. Interacts with p6-gag region of the Pr55 Gag precursor protein through a (Leu-X-X)4 motif near the C-terminus of the P6gag protein. Interacts with host UNG. May interact with host RAD23A/HHR23A. Interacts with host VPRBP/DCAF1, leading to hijack the CUL4A-RBX1-DDB1-DCAF1/VPRBP complex, mediating ubiquitination of host proteins such as TERT and ZGPAT and arrest of the cell cycle in G2 phase. In terms of processing, phosphorylated on several residues by host. These phosphorylations regulate VPR activity for the nuclear import of the HIV-1 pre-integration complex.

Its subcellular location is the virion. It localises to the host nucleus. The protein localises to the host extracellular space. In terms of biological role, during virus replication, may deplete host UNG protein, and incude G2-M cell cycle arrest. Acts by targeting specific host proteins for degradation by the 26S proteasome, through association with the cellular CUL4A-DDB1 E3 ligase complex by direct interaction with host VPRPB/DCAF-1. Cell cycle arrest reportedly occurs within hours of infection and is not blocked by antiviral agents, suggesting that it is initiated by the VPR carried into the virion. Additionally, VPR induces apoptosis in a cell cycle dependent manner suggesting that these two effects are mechanistically linked. Detected in the serum and cerebrospinal fluid of AIDS patient, VPR may also induce cell death to bystander cells. Its function is as follows. During virus entry, plays a role in the transport of the viral pre-integration (PIC) complex to the host nucleus. This function is crucial for viral infection of non-dividing macrophages. May act directly at the nuclear pore complex, by binding nucleoporins phenylalanine-glycine (FG)-repeat regions. In Homo sapiens (Human), this protein is Protein Vpr.